The following is a 543-amino-acid chain: Chaperonin GroEL (543 aa).

ATP contacts are provided by residues 30–33 (TLGP), Lys-51, 87–91 (DGTTT), Gly-415, 479–481 (NAA), and Asp-495.

The protein belongs to the chaperonin (HSP60) family. In terms of assembly, forms a cylinder of 14 subunits composed of two heptameric rings stacked back-to-back. Interacts with the co-chaperonin GroES.

It localises to the cytoplasm. It carries out the reaction ATP + H2O + a folded polypeptide = ADP + phosphate + an unfolded polypeptide.. Functionally, together with its co-chaperonin GroES, plays an essential role in assisting protein folding. The GroEL-GroES system forms a nano-cage that allows encapsulation of the non-native substrate proteins and provides a physical environment optimized to promote and accelerate protein folding. This Francisella philomiragia subsp. philomiragia (strain ATCC 25017 / CCUG 19701 / FSC 153 / O#319-036) protein is Chaperonin GroEL.